A 156-amino-acid chain; its full sequence is Arginine repressor (156 aa).

The protein belongs to the ArgR family.

The protein resides in the cytoplasm. It participates in amino-acid biosynthesis; L-arginine biosynthesis [regulation]. Functionally, regulates arginine biosynthesis genes. This Shewanella loihica (strain ATCC BAA-1088 / PV-4) protein is Arginine repressor.